Reading from the N-terminus, the 500-residue chain is NAD(P)H-quinone oxidoreductase chain 4, chloroplastic (500 aa).

14 helical membrane passes run 4–24 (FPWL…IFLF), 31–51 (VIKW…TYAF), 84–104 (GFSL…TLAA), 111–129 (SRLF…IGLF), 134–154 (LLLF…LLSM), 167–187 (FILY…GIAL), 208–228 (ALEI…SPII), 242–262 (HYST…YGLV), 272–292 (AHSI…IYAA), 305–325 (IAYS…SISD), 330–350 (GAIL…FLAG), 386–406 (LALP…GIIT), 416–436 (ILIT…LLSM), and 463–483 (FVSI…DFVF).

The protein belongs to the complex I subunit 4 family.

It localises to the plastid. The protein resides in the chloroplast thylakoid membrane. The catalysed reaction is a plastoquinone + NADH + (n+1) H(+)(in) = a plastoquinol + NAD(+) + n H(+)(out). The enzyme catalyses a plastoquinone + NADPH + (n+1) H(+)(in) = a plastoquinol + NADP(+) + n H(+)(out). The chain is NAD(P)H-quinone oxidoreductase chain 4, chloroplastic from Manihot esculenta (Cassava).